We begin with the raw amino-acid sequence, 837 residues long: Periplasmic nitrate reductase (837 aa).

The tat-type signal signal peptide spans 1–31; sequence MKLNRRDFIKANAAAAAISAAGLSVPGAAVA. The 4Fe-4S Mo/W bis-MGD-type domain occupies 37–93; it reads IRWDKAACRFCGTGCGVLVGTQDGRVVATQGDPDAPVNRGLNCIKGYFLSKIMYGAD. [4Fe-4S] cluster contacts are provided by Cys44, Cys47, Cys51, and Cys79. Mo-bis(molybdopterin guanine dinucleotide)-binding positions include Lys81, Gln148, Asn173, Cys177, 210–217, 241–245, and 260–262; these read WGSNMAEM, STFEH, and QTD. Residues 308–329 form a disordered region; that stretch reads EKNATSNGYPDADGKPKGDTGK. Positions 319 to 329 are enriched in basic and acidic residues; sequence ADGKPKGDTGK. Residues Met381, Gln385, Asn491, 517–518, Lys540, Asp567, and 727–736 contribute to the Mo-bis(molybdopterin guanine dinucleotide) site; these read SD and TGRVLEHWHT. Phe803 serves as a coordination point for substrate. Asn811 and Lys828 together coordinate Mo-bis(molybdopterin guanine dinucleotide).

Belongs to the prokaryotic molybdopterin-containing oxidoreductase family. NasA/NapA/NarB subfamily. Component of the periplasmic nitrate reductase NapAB complex composed of NapA and NapB. [4Fe-4S] cluster serves as cofactor. Mo-bis(molybdopterin guanine dinucleotide) is required as a cofactor. Post-translationally, predicted to be exported by the Tat system. The position of the signal peptide cleavage has not been experimentally proven.

The protein localises to the periplasm. The enzyme catalyses 2 Fe(II)-[cytochrome] + nitrate + 2 H(+) = 2 Fe(III)-[cytochrome] + nitrite + H2O. Functionally, catalytic subunit of the periplasmic nitrate reductase complex NapAB. Receives electrons from NapB and catalyzes the reduction of nitrate to nitrite. The chain is Periplasmic nitrate reductase from Dechloromonas aromatica (strain RCB).